The chain runs to 127 residues: Aspartate 1-decarboxylase (127 aa).

The active-site Schiff-base intermediate with substrate; via pyruvic acid is Ser-25. Residue Ser-25 is modified to Pyruvic acid (Ser). Thr-57 lines the substrate pocket. Tyr-58 functions as the Proton donor in the catalytic mechanism. 73 to 75 is a substrate binding site; the sequence is GSA.

It belongs to the PanD family. As to quaternary structure, heterooctamer of four alpha and four beta subunits. Pyruvate serves as cofactor. Is synthesized initially as an inactive proenzyme, which is activated by self-cleavage at a specific serine bond to produce a beta-subunit with a hydroxyl group at its C-terminus and an alpha-subunit with a pyruvoyl group at its N-terminus.

It is found in the cytoplasm. The enzyme catalyses L-aspartate + H(+) = beta-alanine + CO2. The protein operates within cofactor biosynthesis; (R)-pantothenate biosynthesis; beta-alanine from L-aspartate: step 1/1. Functionally, catalyzes the pyruvoyl-dependent decarboxylation of aspartate to produce beta-alanine. The chain is Aspartate 1-decarboxylase from Dechloromonas aromatica (strain RCB).